Consider the following 300-residue polypeptide: Acetaldehyde dehydrogenase 3 (300 aa).

11 to 14 (SGNI) lines the NAD(+) pocket. The active-site Acyl-thioester intermediate is the cysteine 126. NAD(+)-binding positions include 157 to 165 (SAGPGTRAN) and asparagine 276.

It belongs to the acetaldehyde dehydrogenase family.

It catalyses the reaction acetaldehyde + NAD(+) + CoA = acetyl-CoA + NADH + H(+). This chain is Acetaldehyde dehydrogenase 3 (hsaG), found in Rhodococcus jostii (strain RHA1).